The primary structure comprises 391 residues: B2 bradykinin receptor (391 aa).

At methionine 1–glutamine 60 the chain is on the extracellular side. Asparagine 30 and asparagine 39 each carry an N-linked (GlcNAc...) asparagine glycan. A helical transmembrane segment spans residues proline 61–leucine 84. Residues histidine 85–glutamate 93 are Cytoplasmic-facing. Residues isoleucine 94–serine 118 traverse the membrane as a helical segment. At asparagine 119 to arginine 131 the chain is on the extracellular side. A disulfide bond links cysteine 130 and cysteine 211. Residues valine 132–isoleucine 153 traverse the membrane as a helical segment. At aspartate 154–lysine 175 the chain is on the cytoplasmic side. Tyrosine 156 carries the post-translational modification Phosphotyrosine. The helical transmembrane segment at leucine 176–methionine 198 threads the bilayer. The Extracellular segment spans residues lysine 199 to glutamate 221. Asparagine 207 carries an N-linked (GlcNAc...) asparagine glycan. Residues valine 222–methionine 248 traverse the membrane as a helical segment. The Cytoplasmic segment spans residues glutamine 249–arginine 267. The helical transmembrane segment at alanine 268–leucine 292 threads the bilayer. Residues aspartate 293 to aspartate 311 are Extracellular-facing. Residues valine 312–valine 335 form a helical membrane-spanning segment. Residues glycine 336–glutamine 391 lie on the Cytoplasmic side of the membrane. Tyrosine 347 bears the Phosphotyrosine mark. Cysteine 351 is lipidated: S-palmitoyl cysteine. Serine 366 carries the post-translational modification Phosphoserine. Phosphothreonine is present on threonine 369. Residues serine 373 and serine 375 each carry the phosphoserine; by GRK6 modification.

Belongs to the G-protein coupled receptor 1 family. Bradykinin receptor subfamily. BDKRB2 sub-subfamily. Forms a complex with PECAM1 and GNAQ. Interacts with PECAM1. Ubiquitous. Widespread in normal smooth muscle tissue and neurons.

The protein resides in the cell membrane. In terms of biological role, receptor for bradykinin. It is associated with G proteins that activate a phosphatidylinositol-calcium second messenger system. The chain is B2 bradykinin receptor (BDKRB2) from Homo sapiens (Human).